A 74-amino-acid polypeptide reads, in one-letter code: UPF0352 protein MS1910 (74 aa).

It belongs to the UPF0352 family.

In Mannheimia succiniciproducens (strain KCTC 0769BP / MBEL55E), this protein is UPF0352 protein MS1910.